Here is a 173-residue protein sequence, read N- to C-terminus: Large ribosomal subunit protein uL10 (173 aa).

The protein belongs to the universal ribosomal protein uL10 family. Part of the ribosomal stalk of the 50S ribosomal subunit. The N-terminus interacts with L11 and the large rRNA to form the base of the stalk. The C-terminus forms an elongated spine to which L12 dimers bind in a sequential fashion forming a multimeric L10(L12)X complex.

Forms part of the ribosomal stalk, playing a central role in the interaction of the ribosome with GTP-bound translation factors. This Acidithiobacillus ferrooxidans (strain ATCC 23270 / DSM 14882 / CIP 104768 / NCIMB 8455) (Ferrobacillus ferrooxidans (strain ATCC 23270)) protein is Large ribosomal subunit protein uL10.